The following is a 366-amino-acid chain: Alanine racemase (366 aa).

Catalysis depends on lysine 40, which acts as the Proton acceptor; specific for D-alanine. Lysine 40 is modified (N6-(pyridoxal phosphate)lysine). Arginine 136 is a substrate binding site. The active-site Proton acceptor; specific for L-alanine is the tyrosine 263. Methionine 310 contributes to the substrate binding site.

It belongs to the alanine racemase family. It depends on pyridoxal 5'-phosphate as a cofactor.

The enzyme catalyses L-alanine = D-alanine. The protein operates within amino-acid biosynthesis; D-alanine biosynthesis; D-alanine from L-alanine: step 1/1. Its function is as follows. Catalyzes the interconversion of L-alanine and D-alanine. May also act on other amino acids. The chain is Alanine racemase (alr) from Streptococcus agalactiae serotype Ia (strain ATCC 27591 / A909 / CDC SS700).